A 372-amino-acid chain; its full sequence is Alpha-1-antitrypsin homolog (372 aa).

The signal sequence occupies residues 1–19 (MPATCLLHTMLTLPSPSTR). N-linked (GlcNAc...) asparagine glycosylation is found at asparagine 214 and asparagine 226. The segment at 328–347 (AATTIEIMPMSLPDTVILNR) is RCL.

The protein belongs to the serpin family.

It localises to the secreted. This Cyprinus carpio (Common carp) protein is Alpha-1-antitrypsin homolog.